The chain runs to 257 residues: Type III pantothenate kinase (257 aa).

Asp6 to Val13 serves as a coordination point for ATP. Substrate-binding positions include Tyr100 and Gly107–Arg110. The Proton acceptor role is filled by Asp109. K(+) is bound at residue Asp129. Thr132 contributes to the ATP binding site. Thr184 is a substrate binding site.

The protein belongs to the type III pantothenate kinase family. Homodimer. It depends on NH4(+) as a cofactor. K(+) serves as cofactor.

The protein localises to the cytoplasm. It carries out the reaction (R)-pantothenate + ATP = (R)-4'-phosphopantothenate + ADP + H(+). It participates in cofactor biosynthesis; coenzyme A biosynthesis; CoA from (R)-pantothenate: step 1/5. Its function is as follows. Catalyzes the phosphorylation of pantothenate (Pan), the first step in CoA biosynthesis. The chain is Type III pantothenate kinase from Clostridium botulinum (strain Alaska E43 / Type E3).